The primary structure comprises 116 residues: Dynein light chain Tctex-type 3 (116 aa).

Residue Y4 is modified to 3'-nitrotyrosine.

Belongs to the dynein light chain Tctex-type family. In terms of assembly, homodimer. The cytoplasmic dynein 1 complex consists of two catalytic heavy chains (HCs) and a number of non-catalytic subunits presented by intermediate chains (ICs), light intermediate chains (LICs) and light chains (LCs); the composition seems to vary in respect to the IC, LIC and LC composition. The heavy chain homodimer serves as a scaffold for the probable homodimeric assembly of the respective non-catalytic subunits. The ICs and LICs bind directly to the HC dimer and the LCs assemble on the IC dimer. DYNLT1 and DYNLT3 compete for association with dynein IC (DYNC1I1 or DYNC1I2). Self-associates. Interacts with DYNC1I1 and DYNC1I2. Interacts with BUB3. Interacts with SATB1 in nucleus to form complex with matrix attachment regions (MARs) of DNA.

The protein localises to the nucleus. It is found in the cytoplasm. Its subcellular location is the cytoskeleton. It localises to the chromosome. The protein resides in the centromere. The protein localises to the kinetochore. Its function is as follows. Acts as one of several non-catalytic accessory components of the cytoplasmic dynein 1 complex that are thought to be involved in linking dynein to cargos and to adapter proteins that regulate dynein function. Cytoplasmic dynein 1 acts as a motor for the intracellular retrograde motility of vesicles and organelles along microtubules. Probably binds BUB3 as part of transport cargo. Required for the efficient progression through mitosis. The protein is Dynein light chain Tctex-type 3 (DYNLT3) of Homo sapiens (Human).